Here is a 200-residue protein sequence, read N- to C-terminus: Potassium-transporting ATPase KdpC subunit (200 aa).

A helical membrane pass occupies residues 7 to 27; that stretch reads PALVMIVLFTILTGLIYPLAM.

Belongs to the KdpC family. The system is composed of three essential subunits: KdpA, KdpB and KdpC.

The protein resides in the cell inner membrane. Its function is as follows. Part of the high-affinity ATP-driven potassium transport (or Kdp) system, which catalyzes the hydrolysis of ATP coupled with the electrogenic transport of potassium into the cytoplasm. This subunit acts as a catalytic chaperone that increases the ATP-binding affinity of the ATP-hydrolyzing subunit KdpB by the formation of a transient KdpB/KdpC/ATP ternary complex. This chain is Potassium-transporting ATPase KdpC subunit, found in Methylocella silvestris (strain DSM 15510 / CIP 108128 / LMG 27833 / NCIMB 13906 / BL2).